Consider the following 689-residue polypeptide: Glycine--tRNA ligase beta subunit (689 aa).

It belongs to the class-II aminoacyl-tRNA synthetase family. As to quaternary structure, tetramer of two alpha and two beta subunits.

The protein resides in the cytoplasm. It catalyses the reaction tRNA(Gly) + glycine + ATP = glycyl-tRNA(Gly) + AMP + diphosphate. The protein is Glycine--tRNA ligase beta subunit of Salmonella heidelberg (strain SL476).